The chain runs to 338 residues: MENLDALVAQALEAVQHSEDVNALEQLRVHYLGKKGELTQLMQTLGKLSAEERPKAGALINTAKNSVQEALNTRKADLESAALTAKLAAERIDVTLPGRGQASGGLHPVTRTLERVEQFFTRIGYSVAEGPEVEDDYHNFEALNIPGHHPARAMHDTFYFNANMLLRTHTSPVQVRTMESSQPPIRIVCPGRVYRCDSDITHSPMFHQVEGLLIDEGISFADLKGTIEEFLRVFFEKPLGVRFRPSFFPFTEPSAEVDMQCVICGGHGCRVCKHTGWLEVMGCGMVHPNVLGMSGIDPEKYQGFAFGMGVERLAMLRYGVNDLRLFFDNDLRFLAQFR.

A Mg(2+)-binding site is contributed by Glu252.

The protein belongs to the class-II aminoacyl-tRNA synthetase family. Phe-tRNA synthetase alpha subunit type 1 subfamily. As to quaternary structure, tetramer of two alpha and two beta subunits. Requires Mg(2+) as cofactor.

The protein resides in the cytoplasm. It carries out the reaction tRNA(Phe) + L-phenylalanine + ATP = L-phenylalanyl-tRNA(Phe) + AMP + diphosphate + H(+). This Azotobacter vinelandii (strain DJ / ATCC BAA-1303) protein is Phenylalanine--tRNA ligase alpha subunit.